The chain runs to 196 residues: MDRVKEFAMKDQIRAHRMAGRIRHLISRQIETKLRDQLGLVTITEVQVTGDLHHAKVFVTVYGTKDEAQTALKILEDNRANFRRSLGVLKVRFVPTVEFELDRLFEDAGIMDELIQRARESDKRIAAGASGPIDNDATALMDKVVDQEARNPDSWHTAPTSSSHTAGLCLVRASSPIACNIDSTTLCKPRTPGPGL.

Belongs to the RbfA family. As to quaternary structure, monomer. Binds 30S ribosomal subunits, but not 50S ribosomal subunits or 70S ribosomes.

It localises to the cytoplasm. Its function is as follows. One of several proteins that assist in the late maturation steps of the functional core of the 30S ribosomal subunit. Associates with free 30S ribosomal subunits (but not with 30S subunits that are part of 70S ribosomes or polysomes). Required for efficient processing of 16S rRNA. May interact with the 5'-terminal helix region of 16S rRNA. The sequence is that of Ribosome-binding factor A from Tropheryma whipplei (strain TW08/27) (Whipple's bacillus).